The following is a 155-amino-acid chain: Transcription antitermination protein NusB (155 aa).

It belongs to the NusB family.

Involved in transcription antitermination. Required for transcription of ribosomal RNA (rRNA) genes. Binds specifically to the boxA antiterminator sequence of the ribosomal RNA (rrn) operons. This chain is Transcription antitermination protein NusB, found in Mesorhizobium japonicum (strain LMG 29417 / CECT 9101 / MAFF 303099) (Mesorhizobium loti (strain MAFF 303099)).